Reading from the N-terminus, the 130-residue chain is Small ribosomal subunit protein uS8 (130 aa).

Belongs to the universal ribosomal protein uS8 family. As to quaternary structure, part of the 30S ribosomal subunit. Contacts proteins S5 and S12.

In terms of biological role, one of the primary rRNA binding proteins, it binds directly to 16S rRNA central domain where it helps coordinate assembly of the platform of the 30S subunit. This Shewanella sp. (strain MR-7) protein is Small ribosomal subunit protein uS8.